Consider the following 186-residue polypeptide: Pyridoxal 5'-phosphate synthase subunit PdxT (186 aa).

Position 47 to 49 (47 to 49 (GES)) interacts with L-glutamine. Cysteine 79 functions as the Nucleophile in the catalytic mechanism. L-glutamine is bound by residues arginine 106 and 134–135 (IR). Catalysis depends on charge relay system residues histidine 170 and glutamate 172.

This sequence belongs to the glutaminase PdxT/SNO family. In terms of assembly, in the presence of PdxS, forms a dodecamer of heterodimers. Only shows activity in the heterodimer.

The catalysed reaction is aldehydo-D-ribose 5-phosphate + D-glyceraldehyde 3-phosphate + L-glutamine = pyridoxal 5'-phosphate + L-glutamate + phosphate + 3 H2O + H(+). It catalyses the reaction L-glutamine + H2O = L-glutamate + NH4(+). It participates in cofactor biosynthesis; pyridoxal 5'-phosphate biosynthesis. Functionally, catalyzes the hydrolysis of glutamine to glutamate and ammonia as part of the biosynthesis of pyridoxal 5'-phosphate. The resulting ammonia molecule is channeled to the active site of PdxS. The protein is Pyridoxal 5'-phosphate synthase subunit PdxT of Methanothrix thermoacetophila (strain DSM 6194 / JCM 14653 / NBRC 101360 / PT) (Methanosaeta thermophila).